Reading from the N-terminus, the 100-residue chain is Small ribosomal subunit protein uS14c (100 aa).

Belongs to the universal ribosomal protein uS14 family. In terms of assembly, part of the 30S ribosomal subunit.

The protein localises to the plastid. It localises to the chloroplast. Its function is as follows. Binds 16S rRNA, required for the assembly of 30S particles. The polypeptide is Small ribosomal subunit protein uS14c (Mesostigma viride (Green alga)).